Consider the following 668-residue polypeptide: DNA ligase (668 aa).

Residues 32–36 (DAEYD), 81–82 (SL), and Glu-111 contribute to the NAD(+) site. The active-site N6-AMP-lysine intermediate is the Lys-113. The NAD(+) site is built by Arg-134, Glu-171, Lys-290, and Lys-314. Positions 408, 411, 426, and 432 each coordinate Zn(2+). In terms of domain architecture, BRCT spans 591–668 (EEDLSLKGQT…DEEALIAILS (78 aa)).

The protein belongs to the NAD-dependent DNA ligase family. LigA subfamily. Mg(2+) is required as a cofactor. Requires Mn(2+) as cofactor.

The catalysed reaction is NAD(+) + (deoxyribonucleotide)n-3'-hydroxyl + 5'-phospho-(deoxyribonucleotide)m = (deoxyribonucleotide)n+m + AMP + beta-nicotinamide D-nucleotide.. DNA ligase that catalyzes the formation of phosphodiester linkages between 5'-phosphoryl and 3'-hydroxyl groups in double-stranded DNA using NAD as a coenzyme and as the energy source for the reaction. It is essential for DNA replication and repair of damaged DNA. In Shewanella pealeana (strain ATCC 700345 / ANG-SQ1), this protein is DNA ligase.